The sequence spans 302 residues: tRNA pseudouridine synthase B (302 aa).

Residue Asp45 is the Nucleophile of the active site.

It belongs to the pseudouridine synthase TruB family. Type 1 subfamily.

It catalyses the reaction uridine(55) in tRNA = pseudouridine(55) in tRNA. Responsible for synthesis of pseudouridine from uracil-55 in the psi GC loop of transfer RNAs. This is tRNA pseudouridine synthase B from Francisella tularensis subsp. tularensis (strain WY96-3418).